Reading from the N-terminus, the 306-residue chain is Phosphoadenosine phosphosulfate reductase (306 aa).

2 disordered regions span residues 1–30 (MPAK…VSGG) and 245–266 (YHST…KGQA).

This sequence belongs to the PAPS reductase family. CysH subfamily.

It carries out the reaction [thioredoxin]-disulfide + sulfite + adenosine 3',5'-bisphosphate + 2 H(+) = [thioredoxin]-dithiol + 3'-phosphoadenylyl sulfate. The protein operates within sulfur metabolism; hydrogen sulfide biosynthesis; sulfite from sulfate: step 3/3. The NADP dependent reduction of PAPS into sulfite involves thioredoxin which probably plays the role of a thiol carrier. The chain is Phosphoadenosine phosphosulfate reductase (sA) from Emericella nidulans (strain FGSC A4 / ATCC 38163 / CBS 112.46 / NRRL 194 / M139) (Aspergillus nidulans).